A 73-amino-acid chain; its full sequence is Mitofissin (73 aa).

It belongs to the ?ATG44? family. In terms of assembly, homooligomer. Found as homooctamer in solution, but binds to membranes either as a monomer, dimer, or tetramer, not as an octamer.

It is found in the mitochondrion intermembrane space. The protein resides in the vacuole. Functionally, mitochondrial fission factor that acts directly on lipid membranes to drive mitochondrial fission required for mitophagy. Directly binds to lipid membranes and brings about lipid membrane fragility to facilitate membrane fission and engulfment of mitochondria by the phagophore. In Saccharomyces cerevisiae (strain ATCC 204508 / S288c) (Baker's yeast), this protein is Mitofissin.